The sequence spans 390 residues: Protein shisa-9 (390 aa).

The N-terminal stretch at 1–22 (MTGIRAIFYYFLVDLLTLLCWA) is a signal peptide. Residues 23 to 134 (QGKGGQHFGS…DPSHDPTRDK (112 aa)) are Extracellular-facing. N-linked (GlcNAc...) asparagine glycans are attached at residues Asn-40 and Asn-74. The helical transmembrane segment at 135 to 155 (TNLIVYIICGVVAVMVLVGIF) threads the bilayer. Residues 156–390 (TKLGLEKAHR…VTNSKTEVTV (235 aa)) lie on the Cytoplasmic side of the membrane.

It belongs to the shisa family. SHISA9 subfamily. Component of some AMPA receptors (ionotropic glutamate receptors) complex.

It is found in the cell projection. The protein localises to the dendritic spine membrane. It localises to the synapse. Its function is as follows. Regulator of short-term neuronal synaptic plasticity in the dentate gyrus. Associates with AMPA receptors (ionotropic glutamate receptors) in synaptic spines and promotes AMPA receptor desensitization at excitatory synapses. The sequence is that of Protein shisa-9 (shisa9) from Xenopus tropicalis (Western clawed frog).